The following is a 280-amino-acid chain: UPF0494 membrane protein C750.06c (280 aa).

4 consecutive transmembrane segments (helical) span residues tryptophan 107 to valine 127, isoleucine 144 to phenylalanine 164, valine 178 to isoleucine 198, and alanine 199 to glycine 219.

It belongs to the UPF0494 family.

It is found in the cytoplasm. It localises to the vacuole. The protein localises to the membrane. In Schizosaccharomyces pombe (strain 972 / ATCC 24843) (Fission yeast), this protein is UPF0494 membrane protein C750.06c.